The primary structure comprises 257 residues: tRNA-cytidine(32) 2-sulfurtransferase (257 aa).

The short motif at 37–42 (SGGKDS) is the PP-loop motif element. Cysteine 112, cysteine 115, and cysteine 202 together coordinate [4Fe-4S] cluster.

Belongs to the TtcA family. As to quaternary structure, homodimer. Mg(2+) is required as a cofactor. It depends on [4Fe-4S] cluster as a cofactor.

The protein resides in the cytoplasm. The catalysed reaction is cytidine(32) in tRNA + S-sulfanyl-L-cysteinyl-[cysteine desulfurase] + AH2 + ATP = 2-thiocytidine(32) in tRNA + L-cysteinyl-[cysteine desulfurase] + A + AMP + diphosphate + H(+). The protein operates within tRNA modification. Catalyzes the ATP-dependent 2-thiolation of cytidine in position 32 of tRNA, to form 2-thiocytidine (s(2)C32). The sulfur atoms are provided by the cysteine/cysteine desulfurase (IscS) system. The polypeptide is tRNA-cytidine(32) 2-sulfurtransferase (Geobacter metallireducens (strain ATCC 53774 / DSM 7210 / GS-15)).